The primary structure comprises 96 residues: Auxin-responsive protein SAUR29 (96 aa).

This sequence belongs to the ARG7 family.

It localises to the cell membrane. Its function is as follows. Functions as a positive effector of cell expansion through modulation of auxin transport. Involved in thermo-responsiveness of plant architecture. Enhances plasma membrane H(+)-ATPase. This Arabidopsis thaliana (Mouse-ear cress) protein is Auxin-responsive protein SAUR29.